The following is a 474-amino-acid chain: UDP-N-acetylmuramate--L-alanine ligase (474 aa).

116 to 122 (GTHGKTT) is a binding site for ATP.

This sequence belongs to the MurCDEF family.

The protein localises to the cytoplasm. It catalyses the reaction UDP-N-acetyl-alpha-D-muramate + L-alanine + ATP = UDP-N-acetyl-alpha-D-muramoyl-L-alanine + ADP + phosphate + H(+). It functions in the pathway cell wall biogenesis; peptidoglycan biosynthesis. Its function is as follows. Cell wall formation. This Hyphomonas neptunium (strain ATCC 15444) protein is UDP-N-acetylmuramate--L-alanine ligase.